The chain runs to 253 residues: 5'/3'-nucleotidase SurE (253 aa).

Positions 8, 9, 39, and 92 each coordinate a divalent metal cation.

This sequence belongs to the SurE nucleotidase family. A divalent metal cation serves as cofactor.

Its subcellular location is the cytoplasm. It catalyses the reaction a ribonucleoside 5'-phosphate + H2O = a ribonucleoside + phosphate. The enzyme catalyses a ribonucleoside 3'-phosphate + H2O = a ribonucleoside + phosphate. It carries out the reaction [phosphate](n) + H2O = [phosphate](n-1) + phosphate + H(+). Functionally, nucleotidase with a broad substrate specificity as it can dephosphorylate various ribo- and deoxyribonucleoside 5'-monophosphates and ribonucleoside 3'-monophosphates with highest affinity to 3'-AMP. Also hydrolyzes polyphosphate (exopolyphosphatase activity) with the preference for short-chain-length substrates (P20-25). Might be involved in the regulation of dNTP and NTP pools, and in the turnover of 3'-mononucleotides produced by numerous intracellular RNases (T1, T2, and F) during the degradation of various RNAs. The sequence is that of 5'/3'-nucleotidase SurE from Shigella flexneri serotype 5b (strain 8401).